A 300-amino-acid chain; its full sequence is Zinc finger protein RME1 (300 aa).

Residues 80–90 are compositionally biased toward polar residues; sequence QAYDSTSSTEE. A disordered region spans residues 80–100; it reads QAYDSTSSTEEGTAPQLRPDE. 3 C2H2-type zinc fingers span residues 178–199, 206–234, and 256–281; these read YHCSHCSEKFATLVEFAAHLDE, CKCPIEQCPWKILGFQQATGLRRHCASQH, and LNCPFPICQKTFRRKDAYKRHVAMVH.

The protein localises to the nucleus. Involved in the control of meiosis. Represses the transcription of the IME1 gene thereby inhibiting cells from entering meiosis. But also activates the CLN2 gene thus promoting mitosis. This is Zinc finger protein RME1 (RME1) from Saccharomyces cerevisiae (strain ATCC 204508 / S288c) (Baker's yeast).